The sequence spans 313 residues: Putative S-adenosyl-L-methionine-dependent methyltransferase MMAR_0955 (313 aa).

S-adenosyl-L-methionine contacts are provided by residues aspartate 132 and aspartate 161–leucine 162.

Belongs to the UPF0677 family.

Exhibits S-adenosyl-L-methionine-dependent methyltransferase activity. This is Putative S-adenosyl-L-methionine-dependent methyltransferase MMAR_0955 from Mycobacterium marinum (strain ATCC BAA-535 / M).